The chain runs to 453 residues: tRNA modification GTPase MnmE (453 aa).

3 residues coordinate (6S)-5-formyl-5,6,7,8-tetrahydrofolate: R22, E79, and K119. Positions 215-376 constitute a TrmE-type G domain; it reads GMKVVIAGRP…LREHLKACMG (162 aa). Position 225 (N225) interacts with K(+). Residues 225-230, 244-250, 269-272, and 334-337 each bind GTP; these read NAGKSS, TEIAGTT, DTAG, and NKAD. Mg(2+) is bound at residue S229. K(+) is bound by residues T244, I246, and T249. A Mg(2+)-binding site is contributed by T250. K453 contacts (6S)-5-formyl-5,6,7,8-tetrahydrofolate.

It belongs to the TRAFAC class TrmE-Era-EngA-EngB-Septin-like GTPase superfamily. TrmE GTPase family. As to quaternary structure, homodimer. Heterotetramer of two MnmE and two MnmG subunits. K(+) is required as a cofactor.

It localises to the cytoplasm. Functionally, exhibits a very high intrinsic GTPase hydrolysis rate. Involved in the addition of a carboxymethylaminomethyl (cmnm) group at the wobble position (U34) of certain tRNAs, forming tRNA-cmnm(5)s(2)U34. In Aeromonas salmonicida (strain A449), this protein is tRNA modification GTPase MnmE.